We begin with the raw amino-acid sequence, 536 residues long: Casein kinase I homolog RAG8 (536 aa).

Residues 26 to 42 (HSTQVLHGSGQHGMQPS) show a composition bias toward polar residues. Residues 26 to 68 (HSTQVLHGSGQHGMQPSGNNVLNGLANGATGLQSSASSTSTRD) are disordered. Residues 43-65 (GNNVLNGLANGATGLQSSASSTS) are compositionally biased toward low complexity. The Protein kinase domain maps to 77 to 361 (YKIGKKIGEG…QKLDGEYDWM (285 aa)). ATP contacts are provided by residues 83-91 (IGEGSFGVL) and Lys-106. The active-site Proton acceptor is Asp-196. Composition is skewed to polar residues over residues 407 to 420 (NNLN…QSHS) and 427 to 436 (DLTQGVSNAP). The tract at residues 407–524 (NNLNGSNVPL…NGKVQVADSN (118 aa)) is disordered. 2 stretches are compositionally biased toward low complexity: residues 437–453 (QQPQ…QHTQ) and 463–514 (AYKQ…NQPQ). 2 S-palmitoyl cysteine lipidation sites follow: Cys-535 and Cys-536.

The protein belongs to the protein kinase superfamily. CK1 Ser/Thr protein kinase family. Casein kinase I subfamily.

The catalysed reaction is L-seryl-[protein] + ATP = O-phospho-L-seryl-[protein] + ADP + H(+). The enzyme catalyses L-threonyl-[protein] + ATP = O-phospho-L-threonyl-[protein] + ADP + H(+). Its function is as follows. Casein kinases are operationally defined by their preferential utilization of acidic proteins such as caseins as substrates. This chain is Casein kinase I homolog RAG8 (RAG8), found in Kluyveromyces lactis (strain ATCC 8585 / CBS 2359 / DSM 70799 / NBRC 1267 / NRRL Y-1140 / WM37) (Yeast).